The primary structure comprises 503 residues: uncharacterized protein (503 aa).

ABC transporter domains follow at residues 8-249 (VPVA…LGRD) and 261-499 (IVDQ…MSAI). Residue 43–50 (GKNGAGKS) coordinates ATP.

Belongs to the ABC transporter superfamily.

In terms of biological role, probably part of a binding-protein-dependent transport system YphDEF. Probably responsible for energy coupling to the transport system. This is an uncharacterized protein from Escherichia coli (strain K12).